We begin with the raw amino-acid sequence, 525 residues long: Pre-mRNA-processing factor 19 homolog 2 (525 aa).

The U-box domain occupies Met-1–Pro-70. 7 WD repeats span residues Thr-220–Thr-261, Gly-262–Cys-301, Asp-307–Gln-346, Ser-351–Lys-390, Gly-393–Ser-431, Leu-433–Asn-469, and Ser-478–Val-517. The DWD box signature appears at Phe-409 to Arg-424.

Belongs to the WD repeat PRP19 family. As to quaternary structure, homotetramer. Component of the multiprotein assembly MOS4-associated complex (MAC) at least composed of MOS4, CDC5, PRL1 and PRP19 which is related to the PRP19C/Prp19 complex/NTC/Nineteen complex identified in other organisms. Associated with the spliceosome.

The protein resides in the nucleus. It carries out the reaction S-ubiquitinyl-[E2 ubiquitin-conjugating enzyme]-L-cysteine + [acceptor protein]-L-lysine = [E2 ubiquitin-conjugating enzyme]-L-cysteine + N(6)-ubiquitinyl-[acceptor protein]-L-lysine.. Its pathway is protein modification; protein ubiquitination. In terms of biological role, probable ubiquitin-protein ligase which is mainly involved pre-mRNA splicing and DNA repair. Component of the MAC complex that probably regulates defense responses through transcriptional control and thereby is essential for plant innate immunity. This is Pre-mRNA-processing factor 19 homolog 2 (PRP19B) from Arabidopsis thaliana (Mouse-ear cress).